The primary structure comprises 88 residues: Cytochrome c oxidase assembly factor 3, mitochondrial (88 aa).

Topologically, residues 1–32 (MGKLVGAPKGHDRYRDPKTHQITPALYRVRAP) are mitochondrial matrix. The helical transmembrane segment at 33–55 (FFWRNTIALFAVSSIPLAVYLYT) threads the bilayer. The Mitochondrial intermembrane portion of the chain corresponds to 56-88 (FKKMGDDDLGDIPIPPISDEELQKLKLEYENQK).

The protein belongs to the COA3 family. In terms of assembly, component of 250-400 kDa complexes called cytochrome oxidase assembly intermediates or COA complexes.

Its subcellular location is the mitochondrion inner membrane. Its function is as follows. Required for assembly of cytochrome c oxidase (complex IV). The chain is Cytochrome c oxidase assembly factor 3, mitochondrial (COA3) from Candida albicans (strain WO-1) (Yeast).